The following is a 118-amino-acid chain: Large ribosomal subunit protein bL19 (118 aa).

It belongs to the bacterial ribosomal protein bL19 family.

This protein is located at the 30S-50S ribosomal subunit interface and may play a role in the structure and function of the aminoacyl-tRNA binding site. This is Large ribosomal subunit protein bL19 from Saccharophagus degradans (strain 2-40 / ATCC 43961 / DSM 17024).